The sequence spans 114 residues: UPF0145 protein SSO1976 (114 aa).

It belongs to the UPF0145 family.

In Saccharolobus solfataricus (strain ATCC 35092 / DSM 1617 / JCM 11322 / P2) (Sulfolobus solfataricus), this protein is UPF0145 protein SSO1976.